Reading from the N-terminus, the 632-residue chain is MHTKILLPSCILLLLLFTLSSLDVVVAKDGDESGNPFTPKGYLIRYWNKHVSNDLPKPWFLLNKASPLNAAQYATYTKLVADQNAFTTHLQSFCSSANLMCALDLLPSLEKHKGDVHFVSYGDKNFTNYGTKESGLGFNSFKNYTEEENFPVNSFRRYGRDSPHDNQFDNYGAPGGNTPVQSFNSYSTNTPGGSGQFTNYAPGSNVPDLHFTSYSDHGTGGEQDFKSYGNDGNAGQQSFKSYGKDGNGADSQFTTYGNNTNVDGSDFTNYGEAANGENQNFTSYGFNGNNPASSFNNYGVGGNGPSEAFNSYRDQSNVGDDTFTTYVKDANGGEANFTNYGQSFNEGTDVFTTYGKGGNDPHINFKTYGVNNTFKDYVKDTATFSNYHNKTSQDLASLSEVNGGKKVNNRWIEPGKFFREKMLKSGTIMPMPDIKDKMPKRSFLPRAIAAKLPFSTSKIDELKKIFHAANDSQVAKMIGDALSECERAPSPGETKQCVNSAEDMIDFATSVLGRNVVVRTTENTNGSKGNIMIGSIKGINGGKVTKSVSCHQTLYPSLLYYCHSVPKVRVYEADILDPNSKAKINHGVAICHVDTSSWGPRHGAFVALGSGPGKIEVCHWIFENDMTWATAD.

An N-terminal signal peptide occupies residues 1–27; sequence MHTKILLPSCILLLLLFTLSSLDVVVA. Positions 28 to 109 are excised as a propeptide; it reads KDGDESGNPF…MCALDLLPSL (82 aa). N-linked (GlcNAc...) asparagine glycans are attached at residues asparagine 125, asparagine 143, asparagine 258, asparagine 280, asparagine 336, asparagine 371, and asparagine 389. Residues 417–631 form the BURP domain; sequence FFREKMLKSG…FENDMTWATA (215 aa).

As to quaternary structure, interacts with polygalacturonase to form heterodimers.

The protein localises to the secreted. Its subcellular location is the extracellular space. It is found in the apoplast. The protein resides in the cell wall. Non-catalytic subunit of polygalacturonase. In Solanum lycopersicum (Tomato), this protein is Polygalacturonase non-catalytic subunit AroGP3 (GP3).